Reading from the N-terminus, the 199-residue chain is 5'-deoxynucleotidase YfbR (199 aa).

Substrate is bound by residues 18–19 (RW) and His33. Residues 30–142 (VSEHSLQVAM…VKQADALCAY (113 aa)) enclose the HD domain. His33, His68, and Asp69 together coordinate a divalent metal cation. Substrate is bound by residues Asp69, 77–80 (DLPT), and Asp137. Asp137 lines the a divalent metal cation pocket.

The protein belongs to the 5DNU family. Homodimer. Requires a divalent metal cation as cofactor.

Its subcellular location is the cytoplasm. It carries out the reaction a 2'-deoxyribonucleoside 5'-phosphate + H2O = a 2'-deoxyribonucleoside + phosphate. Functionally, catalyzes the strictly specific dephosphorylation of 2'-deoxyribonucleoside 5'-monophosphates. The protein is 5'-deoxynucleotidase YfbR of Salmonella agona (strain SL483).